Consider the following 192-residue polypeptide: UPF0149 protein VP2588 (192 aa).

The protein belongs to the UPF0149 family.

The polypeptide is UPF0149 protein VP2588 (Vibrio parahaemolyticus serotype O3:K6 (strain RIMD 2210633)).